Here is a 461-residue protein sequence, read N- to C-terminus: Coronin-1A (461 aa).

An N-acetylserine modification is found at Ser-2. At Ser-2 the chain carries Phosphoserine; by PKC. WD repeat units follow at residues 13 to 63 (HVFG…LVLP), 73 to 110 (NVPL…MVWE), 123 to 160 (PVIT…LVWD), 164 to 204 (GAAV…RVIE), 207 to 251 (KGTV…ALWD), 258 to 296 (PLSL…RYFE), and 302 to 349 (PFLH…EPIA). Residues 403–418 (ELRVNRGLDSARRRAT) are compositionally biased toward basic and acidic residues. The segment at 403 to 434 (ELRVNRGLDSARRRATPEPSGTPSSDTVSRLE) is disordered. Ser-412 carries the phosphoserine; by PKC modification. Thr-418 bears the Phosphothreonine mark. A compositionally biased stretch (polar residues) spans 421-430 (PSGTPSSDTV). Ser-422 carries the post-translational modification Phosphoserine. Positions 424 to 461 (TPSSDTVSRLEEDVRNLNAIVQKLQERLDRLEETVQAK) form a coiled coil.

It belongs to the WD repeat coronin family. In terms of assembly, binds actin. Post-translationally, phosphorylation at Ser-412 by PKC strongly down-regulates the association with actin. Polyubiquitinated by RNF128 with 'Lys-48'-linked chains, leading to proteasomal degradation. Expressed in spleen, lymph nodes, thymus, brain and at very lower levels in lung. Also expressed in cells of the lymphoid/myeloid lineage. Not expressed in Kuffper cells.

It is found in the cytoplasm. It localises to the cytoskeleton. The protein resides in the cell cortex. The protein localises to the cytoplasmic vesicle. Its subcellular location is the phagosome membrane. Functionally, may be a crucial component of the cytoskeleton of highly motile cells, functioning both in the invagination of large pieces of plasma membrane, as well as in forming protrusions of the plasma membrane involved in cell locomotion. In mycobacteria-infected cells, its retention on the phagosomal membrane prevents fusion between phagosomes and lysosomes. The chain is Coronin-1A (Coro1a) from Mus musculus (Mouse).